Consider the following 749-residue polypeptide: Patatin-like phospholipase domain-containing protein AN0408 (749 aa).

A compositionally biased stretch (basic and acidic residues) spans 1–11 (MEKSAAGDNID). The tract at residues 1–21 (MEKSAAGDNIDKYSPSSIPDY) is disordered. Residues 92–112 (WPFLLFVLGWITFLSVGYALT) form a helical membrane-spanning segment. The PNPLA domain occupies 280–471 (LCLSGGATFA…RTDIPIKALN (192 aa)). Positions 311 to 315 (GTSGG) match the GXSXG motif. Residue S313 is the Nucleophile of the active site. The active-site Proton acceptor is D458. Positions 630–659 (SIQPFPFDNGAAGADQKSNDPREERLNRNF) are disordered. Over residues 646 to 659 (KSNDPREERLNRNF) the composition is skewed to basic and acidic residues.

This sequence belongs to the PLPL family.

Its subcellular location is the membrane. Functionally, probable lipid hydrolase. The polypeptide is Patatin-like phospholipase domain-containing protein AN0408 (Emericella nidulans (strain FGSC A4 / ATCC 38163 / CBS 112.46 / NRRL 194 / M139) (Aspergillus nidulans)).